The sequence spans 1067 residues: Tricorn protease homolog 1 (1067 aa).

The interval 518–551 (TTPSPFGPQRHGRPFETPDREETPDSEGTPTTRI) is disordered. Residues 530–540 (RPFETPDREET) are compositionally biased toward basic and acidic residues. The active-site Charge relay system is the His740. The PDZ-like stretch occupies residues 754-851 (RQGLLGADLS…HAVVVPLADE (98 aa)). Position 914 (Gly914) interacts with substrate. Ser961 acts as the Nucleophile in catalysis. Residue Glu1019 is the Charge relay system of the active site.

Belongs to the peptidase S41B family. In terms of assembly, forms a homohexameric complex; it is not known if it assembles into higher-order structures.

It localises to the cytoplasm. Stimulated by MgCl2. Functionally, degrades oligopeptides in a sequential manner. In Streptomyces coelicolor (strain ATCC BAA-471 / A3(2) / M145), this protein is Tricorn protease homolog 1 (tri1).